The sequence spans 535 residues: Bifunctional purine biosynthesis protein PurH (535 aa).

Residues 6–151 (TRLPVRRALI…KNHKDVAIVV (146 aa)) enclose the MGS-like domain.

Belongs to the PurH family.

It carries out the reaction (6R)-10-formyltetrahydrofolate + 5-amino-1-(5-phospho-beta-D-ribosyl)imidazole-4-carboxamide = 5-formamido-1-(5-phospho-D-ribosyl)imidazole-4-carboxamide + (6S)-5,6,7,8-tetrahydrofolate. The enzyme catalyses IMP + H2O = 5-formamido-1-(5-phospho-D-ribosyl)imidazole-4-carboxamide. It participates in purine metabolism; IMP biosynthesis via de novo pathway; 5-formamido-1-(5-phospho-D-ribosyl)imidazole-4-carboxamide from 5-amino-1-(5-phospho-D-ribosyl)imidazole-4-carboxamide (10-formyl THF route): step 1/1. The protein operates within purine metabolism; IMP biosynthesis via de novo pathway; IMP from 5-formamido-1-(5-phospho-D-ribosyl)imidazole-4-carboxamide: step 1/1. This Azotobacter vinelandii (strain DJ / ATCC BAA-1303) protein is Bifunctional purine biosynthesis protein PurH.